The primary structure comprises 381 residues: Homoserine O-succinyltransferase (381 aa).

The region spanning 45-360 is the AB hydrolase-1 domain; sequence NAVLVCHALN…PHGHDAFLLD (316 aa). The Nucleophile role is filled by serine 151. Arginine 221 lines the substrate pocket. Residues aspartate 321 and histidine 354 contribute to the active site. Substrate is bound at residue aspartate 355.

Belongs to the AB hydrolase superfamily. MetX family. Homodimer.

It is found in the cytoplasm. It carries out the reaction L-homoserine + succinyl-CoA = O-succinyl-L-homoserine + CoA. It functions in the pathway amino-acid biosynthesis; L-methionine biosynthesis via de novo pathway; O-succinyl-L-homoserine from L-homoserine: step 1/1. Functionally, transfers a succinyl group from succinyl-CoA to L-homoserine, forming succinyl-L-homoserine. The polypeptide is Homoserine O-succinyltransferase (Burkholderia pseudomallei (strain 1710b)).